Reading from the N-terminus, the 452-residue chain is Maltoporin (452 aa).

The N-terminal stretch at 1–25 (MMITLRKLPLAVAVAAGVMSAQAMA) is a signal peptide.

It belongs to the porin LamB (TC 1.B.3) family. Homotrimer formed of three 18-stranded antiparallel beta-barrels, containing three independent channels.

The protein resides in the cell outer membrane. It carries out the reaction beta-maltose(in) = beta-maltose(out). Functionally, involved in the transport of maltose and maltodextrins. In Salmonella newport (strain SL254), this protein is Maltoporin.